The following is a 308-amino-acid chain: Elongation factor Ts (308 aa).

The interval 80–83 (TDFV) is involved in Mg(2+) ion dislocation from EF-Tu.

The protein belongs to the EF-Ts family.

Its subcellular location is the cytoplasm. Functionally, associates with the EF-Tu.GDP complex and induces the exchange of GDP to GTP. It remains bound to the aminoacyl-tRNA.EF-Tu.GTP complex up to the GTP hydrolysis stage on the ribosome. The chain is Elongation factor Ts from Rhizobium johnstonii (strain DSM 114642 / LMG 32736 / 3841) (Rhizobium leguminosarum bv. viciae).